The following is a 347-amino-acid chain: Transcription factor JunD (347 aa).

The tract at residues 1 to 43 is disordered; that stretch reads METPFYGDEALSGLGGGASGSGGSFASPGRLFPGAPPTAAAGS. Gly residues predominate over residues 13–23; sequence GLGGGASGSGG. Positions 27 to 39 match the Menin-binding motif (MBM) motif; that stretch reads SPGRLFPGAPPTA. An MAP kinase docking motif; essential for its phosphorylation motif is present at residues 46–55; sequence KKDALTLSLS. The interval 62-86 is disordered; sequence LKPAAAPPPTPLRADGAPSAAPPDG. Positions 73-86 are enriched in low complexity; it reads LRADGAPSAAPPDG. At Ser-90 the chain carries Phosphoserine. Ser-100 bears the Phosphoserine; by MAPK8 mark. Position 117 is a phosphothreonine (Thr-117). The disordered stretch occupies residues 244-264; that stretch reads QTVPDVPSFGESPPLSPIDMD. 3 positions are modified to phosphoserine: Ser-251, Ser-255, and Ser-259. The interval 268–295 is basic motif; sequence RIKAERKRLRNRIAASKCRKRKLERISR. Positions 268–331 constitute a bZIP domain; that stretch reads RIKAERKRLR…AQLKQKVLSH (64 aa). The segment at 296–324 is leucine-zipper; sequence LEEKVKTLKSQNTELASTASLLREQVAQL.

Belongs to the bZIP family. Jun subfamily. In terms of assembly, heterodimer; binds DNA as a heterodimer. Component of an AP-1 transcription factor complex composed of JUN-FOS heterodimers. As part of the AP-1 transcription factor complex, forms heterodimers with FOS proteins, thereby binding to the AP-1 consensus sequence and stimulating transcription. Forms heterodimers with FOSB; thereby binding to the AP-1 consensus sequence. Interacts (via MBM motif) with MEN1; this interaction represses transcriptional activation. Interacts with MAPK10; this interaction is inhibited in the presence of MEN1. Phosphorylated by MAP kinases MAPK8 and MAPK10; phosphorylation is inhibited in the presence of MEN1.

It is found in the nucleus. Its function is as follows. Transcription factor binding AP-1 sites. Heterodimerizes with proteins of the FOS family to form an AP-1 transcription factor complex, thereby enhancing their DNA binding activity to an AP-1 consensus sequence 3'-TGA[GC]TCA-5' and enhancing their transcriptional activity. This is Transcription factor JunD (JUND) from Homo sapiens (Human).